A 137-amino-acid chain; its full sequence is Acidic phospholipase A2 Vur-PL3 (137 aa).

An N-terminal signal peptide occupies residues 1–16 (MRTLWIVAVCLIGVEG). 7 disulfides stabilise this stretch: Cys42–Cys131, Cys44–Cys60, Cys59–Cys111, Cys65–Cys137, Cys66–Cys104, Cys73–Cys97, and Cys91–Cys102. Tyr43, Gly45, and Gly47 together coordinate Ca(2+). His63 is a catalytic residue. Asp64 contacts Ca(2+). Residue Asp105 is part of the active site.

Ca(2+) serves as cofactor. In terms of tissue distribution, expressed by the venom gland.

Its subcellular location is the secreted. The catalysed reaction is a 1,2-diacyl-sn-glycero-3-phosphocholine + H2O = a 1-acyl-sn-glycero-3-phosphocholine + a fatty acid + H(+). In Vipera renardi (Steppe viper), this protein is Acidic phospholipase A2 Vur-PL3.